Reading from the N-terminus, the 321-residue chain is Cytochrome f (321 aa).

A signal peptide spans 1 to 35; sequence MQNRNKNNWMKKWVIRSISILIILNIIAWPSISYA. Heme is bound by residues Y36, C56, C59, and H60. The chain crosses the membrane as a helical span at residues 287–306; sequence IQGLLLFFVSVIMAQILLVL.

Belongs to the cytochrome f family. The 4 large subunits of the cytochrome b6-f complex are cytochrome b6, subunit IV (17 kDa polypeptide, petD), cytochrome f and the Rieske protein, while the 4 small subunits are PetG, PetL, PetM and PetN. The complex functions as a dimer. Heme serves as cofactor.

It is found in the plastid. Its subcellular location is the chloroplast thylakoid membrane. Functionally, component of the cytochrome b6-f complex, which mediates electron transfer between photosystem II (PSII) and photosystem I (PSI), cyclic electron flow around PSI, and state transitions. The polypeptide is Cytochrome f (Psilotum nudum (Whisk fern)).